We begin with the raw amino-acid sequence, 671 residues long: UvrABC system protein B (671 aa).

The Helicase ATP-binding domain occupies 31–414 (DGFEQGEKAQ…ELNQTDHKVE (384 aa)). Residue 44–51 (GATGTGKT) coordinates ATP. A Beta-hairpin motif is present at residues 97-120 (YYDYYQPEAYVPQSDTYIEKDSSI). The Helicase C-terminal domain occupies 435 to 601 (QIDDLVGEVN…TIVKPIRDVI (167 aa)). Residues 630–665 (QNMIKTLTAQMQEAAKKLDFEEAANLRDAIMDLKKQ) enclose the UVR domain.

It belongs to the UvrB family. As to quaternary structure, forms a heterotetramer with UvrA during the search for lesions. Interacts with UvrC in an incision complex.

The protein resides in the cytoplasm. The UvrABC repair system catalyzes the recognition and processing of DNA lesions. A damage recognition complex composed of 2 UvrA and 2 UvrB subunits scans DNA for abnormalities. Upon binding of the UvrA(2)B(2) complex to a putative damaged site, the DNA wraps around one UvrB monomer. DNA wrap is dependent on ATP binding by UvrB and probably causes local melting of the DNA helix, facilitating insertion of UvrB beta-hairpin between the DNA strands. Then UvrB probes one DNA strand for the presence of a lesion. If a lesion is found the UvrA subunits dissociate and the UvrB-DNA preincision complex is formed. This complex is subsequently bound by UvrC and the second UvrB is released. If no lesion is found, the DNA wraps around the other UvrB subunit that will check the other stand for damage. This is UvrABC system protein B from Lactobacillus johnsonii (strain CNCM I-12250 / La1 / NCC 533).